The sequence spans 120 residues: Ribonuclease P protein component 4 (120 aa).

Cys-67, Cys-70, Cys-96, and Cys-99 together coordinate Zn(2+).

It belongs to the eukaryotic/archaeal RNase P protein component 4 family. In terms of assembly, consists of a catalytic RNA component and at least 4-5 protein subunits. Zn(2+) serves as cofactor.

Its subcellular location is the cytoplasm. The catalysed reaction is Endonucleolytic cleavage of RNA, removing 5'-extranucleotides from tRNA precursor.. In terms of biological role, part of ribonuclease P, a protein complex that generates mature tRNA molecules by cleaving their 5'-ends. The chain is Ribonuclease P protein component 4 from Thermococcus sibiricus (strain DSM 12597 / MM 739).